The following is a 768-amino-acid chain: Cullin-3-A (768 aa).

The tract at residues 677–698 is disordered; it reads VAAKQGESDPERKETRQKVDDD. Residues 682–698 are compositionally biased toward basic and acidic residues; that stretch reads GESDPERKETRQKVDDD. The Cullin neddylation domain maps to 698-760; it reads DRKHEIEAAI…REYLARTPED (63 aa). Lysine 712 participates in a covalent cross-link: Glycyl lysine isopeptide (Lys-Gly) (interchain with G-Cter in NEDD8).

This sequence belongs to the cullin family. Component of multiple BCR (BTB-CUL3-RBX1) E3 ubiquitin-protein ligase complexes formed of cul3, rbx1 and a variable BTB domain-containing protein acting as both, adapter to cullin and substrate recognition subunit. Interacts with btbd6. Post-translationally, neddylated. Attachment of NEDD8 is required for the E3 ubiquitin-protein ligase activity of the SCF-like complex.

The protein resides in the nucleus. It participates in protein modification; protein ubiquitination. Probable core component of cullin-based SCF-like E3 ubiquitin-protein ligase complexes which mediate the ubiquitination and subsequent proteasomal degradation of target proteins. The E3 ubiquitin-protein ligase activity of the complex is dependent on the neddylation of the cullin subunit. Involved in ER-Golgi transport by regulating the size of COPII coats, thereby playing a key role in collagen export, which is required for embryonic stem (ES) cells division. May play a role in the regulation of mittotic entry via ubiquitination of aurka. This is Cullin-3-A (cul3a) from Xenopus laevis (African clawed frog).